A 441-amino-acid polypeptide reads, in one-letter code: Serum response factor-binding protein 1 (441 aa).

Coiled coils occupy residues 52 to 77 and 118 to 140; these read KGTE…AMKE and LLKK…RQSA. Disordered regions lie at residues 137 to 342, 357 to 389, and 406 to 441; these read RQSA…RNDK, FHSL…EPPV, and QTMQ…TFDD. Over residues 139-152 the composition is skewed to low complexity; the sequence is SAPAAESSESTSGE. The span at 153–183 shows a compositional bias: basic and acidic residues; sequence GRCKDIARSKDDARESQHPERTVVREQKAKD. Lys201 participates in a covalent cross-link: Glycyl lysine isopeptide (Lys-Gly) (interchain with G-Cter in SUMO2). Ser214 carries the phosphoserine modification. Residues 237 to 246 are compositionally biased toward polar residues; sequence DSNQGKASTK. Basic and acidic residues predominate over residues 269–282; that stretch reads EKEYFDDSTEERFY. Ser276, Ser291, and Ser293 each carry phosphoserine. A compositionally biased stretch (basic and acidic residues) spans 308–321; the sequence is KESGVHSSAKELKP. A Glycyl lysine isopeptide (Lys-Gly) (interchain with G-Cter in SUMO2) cross-link involves residue Lys328. Over residues 366 to 381 the composition is skewed to basic and acidic residues; it reads SRRDPREQAPKNKAPD.

Interacts with SRF. Forms complexes with SRF and SRF cofactors ARID2, MYOCD and NKX2-5. Interacts with the N-terminus of SLC2A4. In terms of tissue distribution, highly expressed in heart, skeletal muscle, liver, kidney, testis and brain. Also expressed in white adipose tissue. Expression is up-regulated in cardiomyopathic heart.

The protein localises to the cytoplasm. It is found in the perinuclear region. In terms of biological role, may be involved in regulating transcriptional activation of cardiac genes during the aging process. May play a role in biosynthesis and/or processing of SLC2A4 in adipose cells. This is Serum response factor-binding protein 1 from Mus musculus (Mouse).